The chain runs to 412 residues: N-carbamoyl-L-amino-acid amidohydrolase (412 aa).

4 residues coordinate a divalent metal cation: histidine 82, aspartate 93, glutamate 128, and histidine 193. Glutamine 196, histidine 229, asparagine 278, arginine 291, and glycine 360 together coordinate an N-carbamoyl-L-alpha-amino acid. The involved in dimerization stretch occupies residues 212–330 (SIVGVRALRV…DVDEFFNLSP (119 aa)). A divalent metal cation is bound at residue histidine 385.

It belongs to the peptidase M20 family. In terms of assembly, homodimer. Mn(2+) serves as cofactor. The cofactor is Ni(2+). Requires Co(2+) as cofactor. It depends on Fe(2+) as a cofactor.

It catalyses the reaction an N-carbamoyl-L-alpha-amino acid + H2O + 2 H(+) = an L-alpha-amino acid + NH4(+) + CO2. It carries out the reaction N-carbamoyl-L-tryptophan + H2O + 2 H(+) = L-tryptophan + NH4(+) + CO2. The catalysed reaction is N-carbamoyl-L-tyrosine + H2O + 2 H(+) = L-tyrosine + NH4(+) + CO2. The enzyme catalyses N-carbamoyl-L-phenylalanine + H2O + 2 H(+) = L-phenylalanine + NH4(+) + CO2. Its function is as follows. Catalyzes the hydrolysis of aliphatic N-carbamoyl-L-alpha-amino acids to free L-alpha-amino acids. Is strictly L-specific since it is inactive toward N-carbamoyl-D-alpha-amino acids. Shows a preference for aromatic N-carbamoyl-L-alpha-amino acids, such as N-carbamoyl-L-tryptophan and N-carbamoyl-L-tyrosine and, to a lesser extent, N-carbamoyl-L-phenylalanine and the non-natural amino acid N-carbamoyl-L-thienylalanine. Carbamoyl derivatives of beta-alanine and charged aliphatic amino acids are not accepted as substrates. In Paenarthrobacter aurescens (Arthrobacter aurescens), this protein is N-carbamoyl-L-amino-acid amidohydrolase.